The following is a 123-amino-acid chain: Small ribosomal subunit protein uS11 (123 aa).

The segment at 1–22 (MAKKRKKKLSSPEGISHIHASA) is disordered.

This sequence belongs to the universal ribosomal protein uS11 family. Part of the 30S ribosomal subunit. Interacts with proteins S7 and S18. Binds to IF-3.

Its function is as follows. Located on the platform of the 30S subunit, it bridges several disparate RNA helices of the 16S rRNA. Forms part of the Shine-Dalgarno cleft in the 70S ribosome. This chain is Small ribosomal subunit protein uS11, found in Malacoplasma penetrans (strain HF-2) (Mycoplasma penetrans).